Here is a 122-residue protein sequence, read N- to C-terminus: Alkene monooxygenase system, ferredoxin component (122 aa).

The Rieske domain occupies 16–111 (VDVCAVDDLW…LKVEGGRVLI (96 aa)). Residues cysteine 55, histidine 57, cysteine 75, and histidine 78 each coordinate [2Fe-2S] cluster.

This sequence belongs to the bacterial ring-hydroxylating dioxygenase ferredoxin component family. Homodimer. The alkene monooxygenase multicomponent enzyme system is composed of an electron transfer component and a monooxygenase component interacting with the effector protein XamoD. The electron transfer component is composed of a ferredoxin reductase (XamoF) and a ferredoxin (XamoC), and the monooxygenase component is formed by a heterohexamer (dimer of heterotrimers) of two alpha subunits (XamoA), two beta subunits (XamoE) and two gamma subunits (XamoB). Requires [2Fe-2S] cluster as cofactor.

The protein localises to the cytoplasm. Functionally, ferredoxin component of the alkene monooxygenase multicomponent enzyme system which catalyzes the O2- and NADH-dependent epoxidation of short chain (C2 to C6) alkenes to their corresponding epoxides. Functions as an intermediate electron transfer protein. This Xanthobacter autotrophicus (strain ATCC BAA-1158 / Py2) protein is Alkene monooxygenase system, ferredoxin component.